The following is a 1455-amino-acid chain: MAGPGSWRDKEVTDLGQLPDPTGIFSLDKAIGLGTYGRIFLGIHEKTGSLVAVKVMSARKTPLPEIGRRVRVNKYQKSVGWRYSDEEEDLRTELNLLRKYSFHKNIVTFYGAFFKLNPPGHQHQLWMVMELCAAGSVTDVVRMTRNQSLKEDWIAYICREILQGLAHLHAHQVIHRDIKGQNVLLTHDAEVKIVDFGVSAQVSRTNGRRNSFIGTPYWMAPEVIHCDEDPRCSYDYRSDVWSVGITAIEMAEGAPPLCKLQPLEALCVILREAAPKVKSSGWSRKFQNFMENCMIKNFLFRPTSGNMLLHPFVHDIKNERRVVESLTKHLTGIIQKREKKGIPVAFEGEEAAKEQYITRRFRGPSCTPELLRVPTSSRCRPLRVLHGEPPQPRWLPDQEDPQDQELQQLQKAAGVFMPLHSQDNTSKLFPKQVEVAPYLRGAAQVVMPVLVQVEAPPQVSKAAQMLKSLPTQDNKATSPEVQAPVAEGQQAQHEALETEQPKDLDQVPEEFQGQDRAPEQPRQGQAAEQQQIHNPVPEQPPEEDREPEQAEVQEEAVEPPQAEIEDKEPEVVQVHAQVLLPLLSQNRHVLLPLHLDRQLLIPVGEQNEEVPRAQAWDLEASRAVGAVQALIEGLSRDLLRAPNAFVTKPLGPLQIFLENLSTDGFYTEPEPTQKKKSKVASLRKAIAKRLRPKRFRAKALWRLEDFEFSDVETSRRRRHRRWEDIFNQHEEQLRRVENDREDDSSDNDEVFHSIQAEVQIEPHAANPAGNEVHERSAPMPCNRNRTHRVKFSPSVGEEEPSLEEAQPQQQQQQPMNIRPRNCLNPQNFQAQSDSSSEEDSPVTRRKSQSSPPYSTIDQKLLIDIHVPDGFKVGKISPPVYLTNEWVGYNALSEIFWDDWIMPTRPARPPEEDGDYVELYDADANANGDEEVANGAYEDPRDGANGHDDMNNQLDQANGYEGHGAAGYNGGDVGGNHGAAFNGPRANYPRAGILKNGHNDGRALNRGAFGVFGDNAARAFHGAAGEAGAAFGNHGANRGNGRGNRNREANGRNEENGAFGRDQHVFPEFEHEESDRGTETSDSIALEITSFDGEQNSGRPVSSTTMGFPIGRSSPRGSDFGSDISYNSPILHVYEKDFSSEVYCGSLWGVNLLLGTQSHLYLMDRSGKAEIVKLIKRRPFRQIQVVEQLNLLITISGKKNRLRVYHLSWLRNKILNNDPKSKKRQKAMRKKEEACKAIDKLIGCEHFSVLQHEETTYIAVAVKSSIHLFAWAPKSFDENTAIKVFPTRDLKPLTVDLAVGSEKTLKIFFSSANGYHIIDAESEVMSEVTLPNNNVVILPDCLGLGVMLSLNAEAASEEANEQLLKKILDVWKDIPSSVAFECTKRITGWDQKAIEVRSLQSTILENELKRRSIKKLRFLCARGDKMFFASTLSNDHSRVYLMSLGKLEELHRSYAV.

The Protein kinase domain maps to 25–313 (FSLDKAIGLG…SGNMLLHPFV (289 aa)). ATP-binding positions include 31-39 (IGLGTYGRI) and lysine 54. The active-site Proton acceptor is the aspartate 177. Disordered regions lie at residues 385-404 (LHGEPPQPRWLPDQEDPQDQ) and 471-568 (TQDN…EDKE). The segment covering 471–480 (TQDNKATSPE) has biased composition (polar residues). Residues 494-505 (EALETEQPKDLD) show a composition bias toward basic and acidic residues. Residues 520 to 531 (QPRQGQAAEQQQ) show a composition bias toward low complexity. Residues 540 to 568 (PPEEDREPEQAEVQEEAVEPPQAEIEDKE) are compositionally biased toward acidic residues. A coiled-coil region spans residues 716–750 (RRRHRRWEDIFNQHEEQLRRVENDREDDSSDNDEV). Disordered stretches follow at residues 760–854 (IEPH…PPYS) and 1029–1080 (AFGN…TETS). Residues serine 847 and serine 850 each carry the phosphoserine modification. Over residues 1029–1038 (AFGNHGANRG) the composition is skewed to low complexity. Positions 1044-1078 (RNREANGRNEENGAFGRDQHVFPEFEHEESDRGTE) are enriched in basic and acidic residues. Residues 1138-1425 (SSEVYCGSLW…RFLCARGDKM (288 aa)) enclose the CNH domain.

This sequence belongs to the protein kinase superfamily. STE Ser/Thr protein kinase family. STE20 subfamily.

The enzyme catalyses L-seryl-[protein] + ATP = O-phospho-L-seryl-[protein] + ADP + H(+). It carries out the reaction L-threonyl-[protein] + ATP = O-phospho-L-threonyl-[protein] + ADP + H(+). In terms of biological role, may phosphorylate cofilin-1 and induce actin polymerization through this process, during the late stages of embryogenesis. Involved in the TNF-alpha-induced signaling pathway. The sequence is that of Nik-related protein kinase (Nrk) from Mus musculus (Mouse).